The following is a 264-amino-acid chain: Protein-lysine methyltransferase METTL21C (264 aa).

Positions methionine 1–glutamine 10 are enriched in polar residues. The tract at residues methionine 1–asparagine 46 is disordered. S-adenosyl-L-methionine contacts are provided by residues tryptophan 92, glycine 120–glycine 122, aspartate 141, tryptophan 172, and serine 193.

Belongs to the methyltransferase superfamily. METTL21 family. In terms of assembly, interacts with members of the heat shock protein 70 families; these proteins may possibly be methylation substrates for the enzyme.

It localises to the nucleus. The protein resides in the cytoplasm. It carries out the reaction L-lysyl-[protein] + S-adenosyl-L-methionine = N(6)-methyl-L-lysyl-[protein] + S-adenosyl-L-homocysteine + H(+). It catalyses the reaction N(6)-methyl-L-lysyl-[protein] + S-adenosyl-L-methionine = N(6),N(6)-dimethyl-L-lysyl-[protein] + S-adenosyl-L-homocysteine + H(+). The enzyme catalyses N(6),N(6)-dimethyl-L-lysyl-[protein] + S-adenosyl-L-methionine = N(6),N(6),N(6)-trimethyl-L-lysyl-[protein] + S-adenosyl-L-homocysteine + H(+). Protein-lysine N-methyltransferase using S-adenosyl-L-methionine as methyl donor. Mono-di and trimethylates 'Lys-943' of AARS1. In Homo sapiens (Human), this protein is Protein-lysine methyltransferase METTL21C.